The following is a 341-amino-acid chain: tRNA N6-adenosine threonylcarbamoyltransferase (341 aa).

Positions 120 and 124 each coordinate Fe cation. Substrate-binding positions include 142–146 (VVSGG), aspartate 175, glycine 188, aspartate 192, and asparagine 281. Residue aspartate 310 coordinates Fe cation.

Belongs to the KAE1 / TsaD family. Fe(2+) is required as a cofactor.

The protein localises to the cytoplasm. The catalysed reaction is L-threonylcarbamoyladenylate + adenosine(37) in tRNA = N(6)-L-threonylcarbamoyladenosine(37) in tRNA + AMP + H(+). Required for the formation of a threonylcarbamoyl group on adenosine at position 37 (t(6)A37) in tRNAs that read codons beginning with adenine. Is involved in the transfer of the threonylcarbamoyl moiety of threonylcarbamoyl-AMP (TC-AMP) to the N6 group of A37, together with TsaE and TsaB. TsaD likely plays a direct catalytic role in this reaction. The sequence is that of tRNA N6-adenosine threonylcarbamoyltransferase from Anoxybacillus flavithermus (strain DSM 21510 / WK1).